The primary structure comprises 88 residues: Large ribosomal subunit protein bL27 (88 aa).

The protein belongs to the bacterial ribosomal protein bL27 family.

This Mycolicibacterium smegmatis (strain ATCC 700084 / mc(2)155) (Mycobacterium smegmatis) protein is Large ribosomal subunit protein bL27.